A 451-amino-acid polypeptide reads, in one-letter code: UPF0210 protein NMA1908 (451 aa).

The protein belongs to the UPF0210 family. Homodimer.

In Neisseria meningitidis serogroup A / serotype 4A (strain DSM 15465 / Z2491), this protein is UPF0210 protein NMA1908.